We begin with the raw amino-acid sequence, 210 residues long: N-(5'-phosphoribosyl)anthranilate isomerase (210 aa).

The protein belongs to the TrpF family.

The enzyme catalyses N-(5-phospho-beta-D-ribosyl)anthranilate = 1-(2-carboxyphenylamino)-1-deoxy-D-ribulose 5-phosphate. Its pathway is amino-acid biosynthesis; L-tryptophan biosynthesis; L-tryptophan from chorismate: step 3/5. This is N-(5'-phosphoribosyl)anthranilate isomerase (TRP1) from Eremothecium gossypii (strain ATCC 10895 / CBS 109.51 / FGSC 9923 / NRRL Y-1056) (Yeast).